A 668-amino-acid chain; its full sequence is Acetoin catabolism regulatory protein (668 aa).

The Sigma-54 factor interaction domain maps to 341–570 (LTGGDAALQL…NVLEYARAVC (230 aa)). Residues 369–376 (GETGSGKE) and 433–442 (ADGGTLFLDE) contribute to the ATP site. Low complexity predominate over residues 586–606 (GPAPSAALPQPGPAQSPAAAP). Residues 586-611 (GPAPSAALPQPGPAQSPAAAPFDPHQ) are disordered. A DNA-binding region (H-T-H motif) is located at residues 630–649 (LSAVARQIGVSRMTLYRRME).

Required for sigma-54-dependent transcription of acoXABC. The protein is Acetoin catabolism regulatory protein (acoR) of Cupriavidus necator (strain ATCC 17699 / DSM 428 / KCTC 22496 / NCIMB 10442 / H16 / Stanier 337) (Ralstonia eutropha).